A 1309-amino-acid chain; its full sequence is Nuclear pore complex protein NUP1 (1309 aa).

Disordered regions lie at residues Met-1 to Trp-58, Arg-83 to Asp-118, Ala-173 to Asn-210, Arg-266 to Arg-296, Ser-329 to Lys-348, Glu-384 to Pro-417, Leu-467 to Pro-538, Ser-594 to Leu-617, and Ser-635 to Asn-680. Residues Ala-2–Val-677 are 25 X 2 AA repeats of F-G. The span at Lys-22–Gln-32 shows a compositional bias: basic residues. A compositionally biased stretch (gly residues) spans Gly-47–Trp-58. Over residues Thr-91–Gln-101 the composition is skewed to polar residues. Residues Pro-195–Pro-204 are compositionally biased toward basic and acidic residues. Positions Pro-268–Ser-283 are enriched in polar residues. The segment covering Lys-396–Ala-405 has biased composition (basic and acidic residues). 2 stretches are compositionally biased toward polar residues: residues Met-597–Leu-617 and Ser-635–Pro-659. A compositionally biased stretch (basic and acidic residues) spans Thr-660–Lys-673. Residues Phe-711 to Gly-712 form repeat 1. Positions Lys-719–Ser-865 are disordered. 2 stretches are compositionally biased toward low complexity: residues Ser-728–Ala-741 and Ser-767–Ser-783. Residues Ser-789–Ile-803 show a composition bias toward polar residues. Residues Phe-804–Gly-805 form repeat 2. The span at Thr-809 to Ser-827 shows a compositional bias: low complexity. Tandem repeats lie at residues Phe-831–Gly-832, Phe-861–Gly-862, Phe-869–Gly-870, Phe-883–Gly-884, Phe-898–Gly-899, Phe-927–Gly-928, Phe-956–Gly-957, Phe-983–Gly-984, Phe-1004–Gly-1005, Phe-1029–Gly-1030, Phe-1038–Gly-1039, and Phe-1053–Gly-1054. A compositionally biased stretch (low complexity) spans Phe-1004–Gln-1023. The segment at Phe-1004–Gln-1028 is disordered. Residues Thr-1068–Ser-1086 show a composition bias toward low complexity. The segment at Thr-1068–Val-1105 is disordered. Repeat 15 spans residues Phe-1089–Gly-1090. Low complexity predominate over residues Pro-1096–Val-1105. 10 consecutive repeat copies span residues Phe-1121–Gly-1122, Phe-1137–Gly-1138, Phe-1151–Gly-1152, Phe-1153–Gly-1154, Phe-1166–Gly-1167, Phe-1177–Gly-1178, Phe-1186–Gly-1187, Phe-1224–Gly-1225, Phe-1238–Gly-1239, and Phe-1255–Gly-1256. The interval Phe-1278–Lys-1309 is disordered. The segment covering Gln-1279–Asp-1293 has biased composition (gly residues). The span at Arg-1297–Lys-1309 shows a compositional bias: basic residues.

Part of the nuclear pore complex (NPC). The NPC has an eight-fold symmetrical structure comprising a central transport channel and two rings, the cytoplasmic and nuclear rings, to which eight filaments are attached. The cytoplasmic filaments have loose ends, while the nuclear filaments are joined in a distal ring, forming a nuclear basket. NPCs are highly dynamic in configuration and composition, and can be devided in 3 subcomplexes, the NUP62 subcomplex, the NUP107-160 subcomplex and the NUP93 subcomplex, containing approximately 30 different nucleoporin proteins. Interacts with EER5, anchoring the TREX-2 complex on the nuclear pore complex. Interacts with UCH1 and UCH2.

The protein resides in the nucleus envelope. Its subcellular location is the nucleus. It localises to the nuclear pore complex. It is found in the cytoplasm. The protein localises to the cytosol. In terms of biological role, nucleoporin required for nuclear mRNA export. Functions as an adapter and/or regulator molecule in the periphery of the nuclear pore complex (NPC). May interact with importin proteins and mediate active nucleocytoplasmic transport through the NPC. Involved in regulation of nuclear morphology. In Arabidopsis thaliana (Mouse-ear cress), this protein is Nuclear pore complex protein NUP1.